A 149-amino-acid chain; its full sequence is Large ribosomal subunit protein uL15 (149 aa).

Composition is skewed to basic residues over residues 1–14 (MPTHLSKTRKHRGH) and 21–30 (RVGKHRKHPG). The interval 1 to 42 (MPTHLSKTRKHRGHVSAGHGRVGKHRKHPGGRGLAGGQHHHR) is disordered.

Belongs to the universal ribosomal protein uL15 family.

This chain is Large ribosomal subunit protein uL15, found in Blumeria hordei (Barley powdery mildew).